The following is a 391-amino-acid chain: Zinc finger protein DPF3 (391 aa).

Residues 152–165 are compositionally biased toward acidic residues; sequence ENGDGFHDDEDFEV. Disordered stretches follow at residues 152-200 and 236-266; these read ENGD…PYVC and LAEE…QKAP. A compositionally biased stretch (basic residues) spans 169 to 183; it reads KRKHRNKGRGRGSGR. The C2H2-type zinc-finger motif lies at 198–235; that stretch reads YVCDNRYKQKHNSKTADSVCGKRYKNRPGLSYHYAHTH. 2 consecutive PHD-type zinc fingers follow at residues 273–333 and 330–380; these read NDYC…CKSC and CKSC…CQNL.

Component of the BAF complex. Interacts with acetylated histones H3 and H4. Component of neuron-specific chromatin remodeling complex (nBAF complex), a subfamily of ATP-dependent SWI/SNF chromatin remodeling complexes. In terms of tissue distribution, expressed in the heart and somites.

It is found in the nucleus. Its function is as follows. Muscle-specific component of the BAF complex, a multiprotein complex involved in transcriptional activation and repression of select genes by chromatin remodeling (alteration of DNA-nucleosome topology). Specifically binds acetylated lysines on histone 3 and 4. In the complex, it acts as a tissue-specific anchor between histone acetylations and methylations and chromatin remodeling. Belongs to the neuron-specific chromatin remodeling complex (nBAF complex) and may play a role in neural development. Plays an essential role in heart and skeletal muscle development. The sequence is that of Zinc finger protein DPF3 (dpf3) from Danio rerio (Zebrafish).